A 161-amino-acid polypeptide reads, in one-letter code: uncharacterized protein (161 aa).

To R.leguminosarum PsiB.

This is an uncharacterized protein from Sinorhizobium fredii (strain NBRC 101917 / NGR234).